A 125-amino-acid polypeptide reads, in one-letter code: UPF0102 protein CCNA_00142 (125 aa).

This sequence belongs to the UPF0102 family.

This Caulobacter vibrioides (strain NA1000 / CB15N) (Caulobacter crescentus) protein is UPF0102 protein CCNA_00142.